The primary structure comprises 580 residues: MGSSRLRVFDPPLERKDSAALSERQLPLPTFDVPYFKYIDEEDEDDEWGSRSQSSTEDDSVDSLLSDRYVVVSGTPEKILEHLLNDLHLAEVQHKETETLLDDFLLTYTVFMTTDDLCQALLRHYSAKKYQGEEENSDVPCRKRKVLHLVSQWISLYKDWLHEDEHSKMFLKTIYRNVLDDVYEYPILEKELKEFQKILGMHRRHTVDEYSPQKKNKALFHQFSLKENWLQHRGTVAETEEIFCHVYVTEHSYISVKAKVSSTAQEILKVVAEKLQRAEEDLALVAIMFSGEKHEFQPNDLAISKSLEASGRIYVYRKDLADTLNPFAENEESQQRSMRILGMNTWDLALELMSFDWSLFNSIHEQELIYFTFSRQGSGEHTVNLSLLLQRCNEVQLWVATEILLCSQLGKRVQLVKKFIKIAAHCKAQQNLNSFFAIVMGLNTASVSRLSQTWEKIPGKFKKLFSELESLTDPSLNHKAYRDAFKKMKPPKIPFMPLLLKDVTFIHEGNKTFLDNLVNFEKLHMIADTVRTLRHCRTNQFGSDMSPKEQQELKSYVNHLYVIDSQQALFELSHRLEPRA.

One can recognise an N-terminal Ras-GEF domain in the interval Asp-67 to Gly-200. Residues Asn-344–Arg-579 form the Ras-GEF domain.

As to expression, in the embryo, expressed in young neurons of the developing telencephalon, diencephalon and hindbrain. Not expressed in progenitor cells in the ventricular zone.

The protein resides in the nucleus. In terms of biological role, guanine nucleotide exchange factor (GEF) for RAP1A, RAP2A and MRAS/M-Ras-GTP. Its association with MRAS inhibits Rap1 activation. The protein is Rap guanine nucleotide exchange factor 5 (Rapgef5) of Rattus norvegicus (Rat).